Here is a 167-residue protein sequence, read N- to C-terminus: Phosphopantetheine adenylyltransferase (167 aa).

T13 is a substrate binding site. ATP contacts are provided by residues 13–14 (TF) and H21. Positions 45, 78, and 92 each coordinate substrate. ATP-binding positions include 93–95 (GLR), E103, and 128–134 (TQFISSS).

It belongs to the bacterial CoaD family. In terms of assembly, homohexamer. Mg(2+) serves as cofactor.

The protein resides in the cytoplasm. It catalyses the reaction (R)-4'-phosphopantetheine + ATP + H(+) = 3'-dephospho-CoA + diphosphate. The protein operates within cofactor biosynthesis; coenzyme A biosynthesis; CoA from (R)-pantothenate: step 4/5. In terms of biological role, reversibly transfers an adenylyl group from ATP to 4'-phosphopantetheine, yielding dephospho-CoA (dPCoA) and pyrophosphate. This Wolbachia sp. subsp. Brugia malayi (strain TRS) protein is Phosphopantetheine adenylyltransferase.